Consider the following 129-residue polypeptide: Glycine cleavage system H protein (129 aa).

Residues T24–K106 form the Lipoyl-binding domain. K65 bears the N6-lipoyllysine mark.

Belongs to the GcvH family. In terms of assembly, the glycine cleavage system is composed of four proteins: P, T, L and H. Requires (R)-lipoate as cofactor.

The glycine cleavage system catalyzes the degradation of glycine. The H protein shuttles the methylamine group of glycine from the P protein to the T protein. This is Glycine cleavage system H protein from Escherichia coli O7:K1 (strain IAI39 / ExPEC).